Consider the following 224-residue polypeptide: UPF0758 protein VFMJ11_0123 (224 aa).

One can recognise an MPN domain in the interval 102-224; it reads ALTSPEHTKR…IVSFAERGWI (123 aa). H173, H175, and D186 together coordinate Zn(2+). A JAMM motif motif is present at residues 173 to 186; that stretch reads HNHPSGVAEPSQAD.

Belongs to the UPF0758 family.

In Aliivibrio fischeri (strain MJ11) (Vibrio fischeri), this protein is UPF0758 protein VFMJ11_0123.